The chain runs to 1122 residues: MKKLIFKLSVGITPLALIGLGSFGLAVSGAKPNNLKPVNQVGEMNSQGQSNLLEKARRWRNSNFTSLSIDGTNPGALVLTGSKSISRIDLYGNVIWTFDPGNTNDLTGKVGFYDANNKLTAFSGDVSFNVSDLSSKTVVEATQDQEDPNVFYLLLMPDAAVQQEQKTKDQVFENYFMSDAPAAGDTSAEGSATPAGGGSGSSAAGGGAVAPAAASSTARLVEEGNSAGMGTMTPTASTSETVIDYNSDQNKIPKPKTLLDSSESSESINGGRTYANINTQKNLQGVIVKVNENLFNSENPFAVENMAFIKPKDMVDNYPSTWTQGSANGKMTNVLQFYKHDNPNAVNNRFYRAKYYPKRLETQTTTPLIDSSFSPYEHPEWYEGNQFVMPWMQYITNLGGLYAKDGMVYLFGGNGTWVNNESALSIGVFRTKFENRTAEAPGNTKTVGYPYGILLSAISFDATRNGLALAAPALGQDVGYHFVPRLAVGGVSSPRGANGNIFLGSAITWGTNGGNFLDTKWHSPAVIEDAPTTFITVNSSGVLQNSGSQQSTSTPMPNSNGNESIPYRWTNSYDYNSVRFAALISKPAGGNTKQVESLFTTALKLDTLNSLPNKFTQENNIFFSYAMLDGRQWSLGTRKDSTWLTTNTINNFTYNTQQQLASTAAGENANPRNILNALTTAKGFDRRDIGNVDILYSNNTNKFTYYYQVGGAITTWPEVQVNYKTSANITYYNLTRTDFGSTTPATQDANTVSSKLNGAYLSSTGDQQGWYNGSIYVKKASFTPSSQGYTWQDFKGLTTTASNAVISNWTKAGYSIRPDDDTVFSVSKIPFEKEITAAVNVRSLDSYYVQLNGETSVNTVARVSPDSSALTLNPKRITNPLMNRDNVIGQGAFISRNDIPSSFFENKINDIVTTEADGTEVLDSKYINSIYRYTPPQNNPHIRLRLLVIDRSRATNDFIKLLPQVLVDGEYVAVPQANSVFVSDQEFTGFDALPGYVLPVAISIPIIIIALALALGLGIGIPMSQNRKMLKQGFAISNKKVDILTTAVGSVFKQIINRTSVTNIKKTPQMLQANKKDGASSPSKPSAPAAKKPTGPTKPSAPGAKPTAPAKPKAPAPTKKIE.

An N-terminal signal peptide occupies residues 1–30 (MKKLIFKLSVGITPLALIGLGSFGLAVSGA). 3 disordered regions span residues 183–209 (AGDT…GGAV), 244–273 (DYNS…GGRT), and 544–563 (QNSG…NGNE). The segment covering 195–208 (AGGGSGSSAAGGGA) has biased composition (gly residues). Residues 259-273 (LDSSESSESINGGRT) show a composition bias toward polar residues. The chain crosses the membrane as a helical span at residues 997–1021 (VLPVAISIPIIIIALALALGLGIGI). The interval 1066 to 1122 (KTPQMLQANKKDGASSPSKPSAPAAKKPTGPTKPSAPGAKPTAPAKPKAPAPTKKIE) is disordered. Residues 1079–1122 (ASSPSKPSAPAAKKPTGPTKPSAPGAKPTAPAKPKAPAPTKKIE) show a composition bias toward low complexity.

This sequence belongs to the adhesin P1 family.

It is found in the cell membrane. Its function is as follows. Could be involved in cytadherence. In Mycoplasmoides gallisepticum (Mycoplasma gallisepticum), this protein is Adhesin P1 (gapA).